Here is a 386-residue protein sequence, read N- to C-terminus: O-methyltransferase 11 (386 aa).

Residues serine 207, glycine 231, aspartate 254, aspartate 274, and lysine 288 each contribute to the S-adenosyl-L-homocysteine site. S-adenosyl-L-methionine is bound at residue aspartate 254. The active-site Proton acceptor is the histidine 292.

Belongs to the class I-like SAM-binding methyltransferase superfamily. Cation-independent O-methyltransferase family. In terms of assembly, homodimer.

The enzyme catalyses dopamine + S-adenosyl-L-methionine = 4-methoxytyramine + S-adenosyl-L-homocysteine + H(+). It catalyses the reaction 3,4-dihydroxy-5-methoxyphenethylamine + S-adenosyl-L-methionine = 3-hydroxy-4,5-dimethoxyphenethylamine + S-adenosyl-L-homocysteine + H(+). The catalysed reaction is 3-hydroxy-4,5-dimethoxyphenethylamine + S-adenosyl-L-methionine = mescaline + S-adenosyl-L-homocysteine + H(+). It carries out the reaction 4-hydroxy-3,5-dimethoxyphenethylamine + S-adenosyl-L-methionine = mescaline + S-adenosyl-L-homocysteine + H(+). The protein operates within aromatic compound metabolism. It functions in the pathway alkaloid biosynthesis. In terms of biological role, O-methyltransferase participating in the biosynthesis of natural products derived from phenylethylamine, including mescaline, a natural hallucinogen potentially used in psychotherapeutic treatments. Catalyzes the O-methylation of mescaline para hydroxyl groups, using dopamine, 3,4-dihydroxy-5-methoxyphenethylamine, 3-hydroxy-4,5-dimethoxyphenethylamine and 4-hydroxy-3,5-dimethoxyphenethylamine as substrates. The sequence is that of O-methyltransferase 11 from Lophophora williamsii (Peyote).